Reading from the N-terminus, the 324-residue chain is NADH-quinone oxidoreductase subunit H (324 aa).

8 helical membrane passes run 11–31 (ILIT…CGAF), 81–101 (VIFT…FAIV), 114–134 (IGIL…LFAG), 154–174 (VSYE…AGSF), 186–206 (LWNV…GVAV), 237–257 (FFVG…TLFF), 265–285 (LPPF…FILI), and 304–324 (VCLP…LYNA).

This sequence belongs to the complex I subunit 1 family. In terms of assembly, NDH-1 is composed of 13 different subunits. Subunits NuoA, H, J, K, L, M, N constitute the membrane sector of the complex.

Its subcellular location is the cell inner membrane. It catalyses the reaction a quinone + NADH + 5 H(+)(in) = a quinol + NAD(+) + 4 H(+)(out). Its function is as follows. NDH-1 shuttles electrons from NADH, via FMN and iron-sulfur (Fe-S) centers, to quinones in the respiratory chain. The immediate electron acceptor for the enzyme in this species is believed to be ubiquinone. Couples the redox reaction to proton translocation (for every two electrons transferred, four hydrogen ions are translocated across the cytoplasmic membrane), and thus conserves the redox energy in a proton gradient. This subunit may bind ubiquinone. The protein is NADH-quinone oxidoreductase subunit H of Pectobacterium atrosepticum (strain SCRI 1043 / ATCC BAA-672) (Erwinia carotovora subsp. atroseptica).